A 482-amino-acid polypeptide reads, in one-letter code: Protein translocase subunit SecY (482 aa).

Residues methionine 1–lysine 22 are disordered. 10 helical membrane passes run isoleucine 41 to glycine 61, phenylalanine 92 to leucine 112, leucine 137 to leucine 157, alanine 177 to isoleucine 197, isoleucine 201 to serine 221, isoleucine 243 to leucine 263, valine 303 to isoleucine 323, phenylalanine 342 to tyrosine 362, valine 405 to threonine 425, and glutamine 426 to isoleucine 446.

The protein belongs to the SecY/SEC61-alpha family. Component of the Sec protein translocase complex. Heterotrimer consisting of SecY, SecE and SecG subunits. The heterotrimers can form oligomers, although 1 heterotrimer is thought to be able to translocate proteins. Interacts with the ribosome. Interacts with SecDF, and other proteins may be involved. Interacts with SecA.

The protein localises to the cell membrane. Functionally, the central subunit of the protein translocation channel SecYEG. Consists of two halves formed by TMs 1-5 and 6-10. These two domains form a lateral gate at the front which open onto the bilayer between TMs 2 and 7, and are clamped together by SecE at the back. The channel is closed by both a pore ring composed of hydrophobic SecY resides and a short helix (helix 2A) on the extracellular side of the membrane which forms a plug. The plug probably moves laterally to allow the channel to open. The ring and the pore may move independently. This chain is Protein translocase subunit SecY, found in Mycoplasma capricolum subsp. capricolum (strain California kid / ATCC 27343 / NCTC 10154).